Consider the following 320-residue polypeptide: Aminoacyl tRNA synthase complex-interacting multifunctional protein 2 (320 aa).

A disordered region spans residues 31–51 (HSKTTSPATDAGHVQEPSEPS). Ser36 is subject to Phosphoserine. An interaction with PRKN region spans residues 82–162 (TPDADLDVTN…HTHSSVKNVP (81 aa)). The interval 162–225 (PENLLKCFGE…FLFSLFGQKH (64 aa)) is interaction with TP53. The region spanning 220–317 (LFGQKHNAVH…NLAPFSTALQ (98 aa)) is the GST C-terminal domain.

In terms of assembly, part of the multisynthetase complex (MSC), a multisubunit complex that groups tRNA ligases for Arg (RARS1), Asp (DARS1), Gln (QARS1), Ile (IARS1), Leu (LARS1), Lys (KARS1), Met (MARS1) the bifunctional ligase for Glu and Pro (EPRS1) and the auxiliary subunits AIMP1/p43, AIMP2/p38 and EEF1E1/p18. Interacts (via N-terminus) with KARS1. Interacts with EPRS1. Forms a linear complex that contains MARS1, EEF1E1, EPRS1 and AIMP2 that is at the core of the multisubunit complex. Binds FUBP1 (via C-terminus). Interacts in both its unphosphorylated and phosphorylated forms with p53/TP53 (via N-terminus) in the nucleus following UV irradiation. Interacts (via N-terminus) with PRKN/parkin (via first RING-type domain). Interacts with TARS3. Post-translationally, phosphorylated on serine residues in response to UV irradiation. In terms of processing, ubiquitinated by PRKN, leading to its degradation by the proteasome.

It localises to the cytoplasm. It is found in the cytosol. Its subcellular location is the nucleus. Its function is as follows. Required for assembly and stability of the aminoacyl-tRNA synthase complex. Mediates ubiquitination and degradation of FUBP1, a transcriptional activator of MYC, leading to MYC down-regulation which is required for aveolar type II cell differentiation. Blocks MDM2-mediated ubiquitination and degradation of p53/TP53. Functions as a proapoptotic factor. The chain is Aminoacyl tRNA synthase complex-interacting multifunctional protein 2 (Aimp2) from Rattus norvegicus (Rat).